A 172-amino-acid chain; its full sequence is Large ribosomal subunit protein uL10 (172 aa).

This sequence belongs to the universal ribosomal protein uL10 family. As to quaternary structure, part of the ribosomal stalk of the 50S ribosomal subunit. The N-terminus interacts with L11 and the large rRNA to form the base of the stalk. The C-terminus forms an elongated spine to which L12 dimers bind in a sequential fashion forming a multimeric L10(L12)X complex.

Functionally, forms part of the ribosomal stalk, playing a central role in the interaction of the ribosome with GTP-bound translation factors. This chain is Large ribosomal subunit protein uL10, found in Francisella tularensis subsp. holarctica (strain FTNF002-00 / FTA).